A 194-amino-acid polypeptide reads, in one-letter code: Peptidyl-tRNA hydrolase (194 aa).

Tyr17 contacts tRNA. His22 acts as the Proton acceptor in catalysis. TRNA is bound by residues Phe69, Asn71, and Asn117.

Belongs to the PTH family. In terms of assembly, monomer.

The protein localises to the cytoplasm. The catalysed reaction is an N-acyl-L-alpha-aminoacyl-tRNA + H2O = an N-acyl-L-amino acid + a tRNA + H(+). Functionally, hydrolyzes ribosome-free peptidyl-tRNAs (with 1 or more amino acids incorporated), which drop off the ribosome during protein synthesis, or as a result of ribosome stalling. In terms of biological role, catalyzes the release of premature peptidyl moieties from peptidyl-tRNA molecules trapped in stalled 50S ribosomal subunits, and thus maintains levels of free tRNAs and 50S ribosomes. The chain is Peptidyl-tRNA hydrolase from Renibacterium salmoninarum (strain ATCC 33209 / DSM 20767 / JCM 11484 / NBRC 15589 / NCIMB 2235).